The following is a 539-amino-acid chain: Chaperonin GroEL 1 (539 aa).

Residues 29–32 (TLGP), 86–90 (DGTTT), Gly413, and Asp493 contribute to the ATP site.

Belongs to the chaperonin (HSP60) family. In terms of assembly, forms a cylinder of 14 subunits composed of two heptameric rings stacked back-to-back. Interacts with the co-chaperonin GroES.

The protein localises to the cytoplasm. It catalyses the reaction ATP + H2O + a folded polypeptide = ADP + phosphate + an unfolded polypeptide.. Together with its co-chaperonin GroES, plays an essential role in assisting protein folding. The GroEL-GroES system forms a nano-cage that allows encapsulation of the non-native substrate proteins and provides a physical environment optimized to promote and accelerate protein folding. The sequence is that of Chaperonin GroEL 1 from Acidothermus cellulolyticus (strain ATCC 43068 / DSM 8971 / 11B).